Consider the following 439-residue polypeptide: Sorting nexin-31 (439 aa).

One can recognise a PX domain in the interval 1–109; sequence MKMHFCIPVS…EFLTLVQLHT (109 aa). The tract at residues 384–409 is disordered; that stretch reads TEQSPEMQIEVPEQGRSKKHPSQPSQ.

It belongs to the sorting nexin family. In terms of assembly, interacts with CCDC22, CCDC93, VPS26C and VPS35L, associates with the retriever and CCC complexes.

Its function is as follows. May be involved in protein trafficking. The chain is Sorting nexin-31 (Snx31) from Mus musculus (Mouse).